The following is a 521-amino-acid chain: Ribonuclease Y (521 aa).

Residues 5–25 (LLLILTAVIMLIVGFAVGAIL) form a helical membrane-spanning segment. The segment at 77–107 (ELKDRRGEVQKQENRLIQREETMDRKDATLD) is disordered. Residues 211–271 (TVTVVTLPND…IRREIARMTL (61 aa)) enclose the KH domain. Residues 337-430 (VLNHSIEVAK…VAASDAISAA (94 aa)) form the HD domain.

This sequence belongs to the RNase Y family.

It localises to the cell membrane. Endoribonuclease that initiates mRNA decay. This is Ribonuclease Y from Latilactobacillus sakei subsp. sakei (strain 23K) (Lactobacillus sakei subsp. sakei).